The primary structure comprises 213 residues: Orotate phosphoribosyltransferase (213 aa).

Lysine 26 lines the 5-phospho-alpha-D-ribose 1-diphosphate pocket. Residue 34–35 (FF) participates in orotate binding. Residues 72-73 (YK), arginine 99, lysine 100, lysine 103, histidine 105, and 124-132 (DDVITAGTA) each bind 5-phospho-alpha-D-ribose 1-diphosphate. Threonine 128 and arginine 156 together coordinate orotate.

Belongs to the purine/pyrimidine phosphoribosyltransferase family. PyrE subfamily. Homodimer. Mg(2+) is required as a cofactor.

The enzyme catalyses orotidine 5'-phosphate + diphosphate = orotate + 5-phospho-alpha-D-ribose 1-diphosphate. It functions in the pathway pyrimidine metabolism; UMP biosynthesis via de novo pathway; UMP from orotate: step 1/2. Catalyzes the transfer of a ribosyl phosphate group from 5-phosphoribose 1-diphosphate to orotate, leading to the formation of orotidine monophosphate (OMP). The polypeptide is Orotate phosphoribosyltransferase (Serratia proteamaculans (strain 568)).